The chain runs to 370 residues: Cobalt-precorrin-5B C(1)-methyltransferase (370 aa).

The protein belongs to the CbiD family.

It carries out the reaction Co-precorrin-5B + S-adenosyl-L-methionine = Co-precorrin-6A + S-adenosyl-L-homocysteine. The protein operates within cofactor biosynthesis; adenosylcobalamin biosynthesis; cob(II)yrinate a,c-diamide from sirohydrochlorin (anaerobic route): step 6/10. Functionally, catalyzes the methylation of C-1 in cobalt-precorrin-5B to form cobalt-precorrin-6A. The chain is Cobalt-precorrin-5B C(1)-methyltransferase from Pseudomonas syringae pv. tomato (strain ATCC BAA-871 / DC3000).